The following is a 153-amino-acid chain: 6,7-dimethyl-8-ribityllumazine synthase (153 aa).

5-amino-6-(D-ribitylamino)uracil is bound by residues phenylalanine 22, alanine 56–glutamate 58, and alanine 80–isoleucine 82. Serine 85–threonine 86 contacts (2S)-2-hydroxy-3-oxobutyl phosphate. Histidine 88 functions as the Proton donor in the catalytic mechanism. Phenylalanine 113 is a binding site for 5-amino-6-(D-ribitylamino)uracil. Arginine 127 contacts (2S)-2-hydroxy-3-oxobutyl phosphate.

The protein belongs to the DMRL synthase family.

It carries out the reaction (2S)-2-hydroxy-3-oxobutyl phosphate + 5-amino-6-(D-ribitylamino)uracil = 6,7-dimethyl-8-(1-D-ribityl)lumazine + phosphate + 2 H2O + H(+). It functions in the pathway cofactor biosynthesis; riboflavin biosynthesis; riboflavin from 2-hydroxy-3-oxobutyl phosphate and 5-amino-6-(D-ribitylamino)uracil: step 1/2. Catalyzes the formation of 6,7-dimethyl-8-ribityllumazine by condensation of 5-amino-6-(D-ribitylamino)uracil with 3,4-dihydroxy-2-butanone 4-phosphate. This is the penultimate step in the biosynthesis of riboflavin. This is 6,7-dimethyl-8-ribityllumazine synthase from Clostridium botulinum (strain Alaska E43 / Type E3).